Consider the following 751-residue polypeptide: FAD-dependent monooxygenase atnA (751 aa).

A helical membrane pass occupies residues 8-28 (LIVGGGVAGLSLAIMLEAYGF). Residues glutamate 34, glycine 48, and arginine 109 each coordinate FAD. The active site involves tyrosine 218. Aspartate 311 and alanine 324 together coordinate FAD. The next 8 helical transmembrane spans lie at 446-466 (PLAT…PWSV), 481-501 (SEVF…LWVI), 508-528 (LLIS…YWGW), 563-583 (ALLP…ALAS), 590-610 (DWWP…STFL), 639-659 (IAVV…AALL), 663-683 (IISL…ALIV), and 706-726 (AWAV…LAGA).

It belongs to the paxM FAD-dependent monooxygenase family. It depends on FAD as a cofactor.

Its subcellular location is the membrane. Its pathway is secondary metabolite biosynthesis; terpenoid biosynthesis. Functionally, FAD-dependent monooxygenase; part of the gene cluster that mediates the biosynthesis of the meroterpenoids arthripenoids. The pathway begins with the HR-PKS atnH that catalyzes two chain-extension steps to form a reduced triketide, which then primes the SAT domain in the NR-PKS atnG to initiate three more cycles of extension to give a linear hexaketide corresponding to the polyketide part of arthripenoids. The FAD-dependent monooxygenase atnJ then performs an oxidative decarboxylation at C11 of the atnH/atnG product, via an electrophilic aromatic hydroxylation with concomitant ipso-decarboxylation. The membrane-bound polyprenyl transferase atnF then introduces a farnesyl group before the FAD-dependent monooxygenase atnK functions as the first epoxidase on terminal C12'-C13' olefin, followed by a second epoxidation on C7'-C8' catalyzed by atnA. The terpene cyclase/mutase atnI then initiates the sequential tricyclic ring formation through protonation of the terminal epoxide and catalyzes the regioselective and stereoselective 6/6/6-tricyclic ring formation. The cytochrome P450 monooxygenase atnM is responsible for hydroxylating both C1' and C10'. The next steps may involve ketoreduction and acetyl transfer by the ketoreductase atnB and the acetyltransferase atnC, and lead to the production of arthripenoid B, the final biosynthetic product of the atn cluster. The hydroquinone moiety in arthripenoid B is prone to undergo spontaneous oxidation to afford a benzoquinone compound, a key intermediate for generating structure diversity. For instance, addition of a cysteine followed by ring contraction gives arthripenoid A, tautomerization gives the main product arthripenoid C, addition of a molecular of water or amine affords arthripenoid D or E, respectively, and loss of one water forms arthripenoid F. The chain is FAD-dependent monooxygenase atnA from Arthrinium sp.